Here is a 224-residue protein sequence, read N- to C-terminus: Cytidylate kinase (224 aa).

Glycine 11–threonine 19 provides a ligand contact to ATP.

It belongs to the cytidylate kinase family. Type 1 subfamily.

It localises to the cytoplasm. The enzyme catalyses CMP + ATP = CDP + ADP. It carries out the reaction dCMP + ATP = dCDP + ADP. The polypeptide is Cytidylate kinase (Bacillus velezensis (strain DSM 23117 / BGSC 10A6 / LMG 26770 / FZB42) (Bacillus amyloliquefaciens subsp. plantarum)).